The primary structure comprises 324 residues: Aspartate carbamoyltransferase catalytic subunit (324 aa).

Residues arginine 71 and threonine 72 each coordinate carbamoyl phosphate. Lysine 99 is a binding site for L-aspartate. Carbamoyl phosphate-binding residues include arginine 121, histidine 151, and glutamine 154. Residues arginine 184 and arginine 239 each contribute to the L-aspartate site. Carbamoyl phosphate-binding residues include glycine 280 and proline 281.

Belongs to the aspartate/ornithine carbamoyltransferase superfamily. ATCase family. In terms of assembly, heterododecamer (2C3:3R2) of six catalytic PyrB chains organized as two trimers (C3), and six regulatory PyrI chains organized as three dimers (R2).

It carries out the reaction carbamoyl phosphate + L-aspartate = N-carbamoyl-L-aspartate + phosphate + H(+). The protein operates within pyrimidine metabolism; UMP biosynthesis via de novo pathway; (S)-dihydroorotate from bicarbonate: step 2/3. Catalyzes the condensation of carbamoyl phosphate and aspartate to form carbamoyl aspartate and inorganic phosphate, the committed step in the de novo pyrimidine nucleotide biosynthesis pathway. In Cupriavidus necator (strain ATCC 17699 / DSM 428 / KCTC 22496 / NCIMB 10442 / H16 / Stanier 337) (Ralstonia eutropha), this protein is Aspartate carbamoyltransferase catalytic subunit.